The following is a 472-amino-acid chain: uncharacterized protein (472 aa).

Composition is skewed to low complexity over residues 1 to 21 and 63 to 74; these read MAFS…SRPG and ASSLPAPASSSP. Positions 1 to 74 are disordered; that stretch reads MAFSSSSLRR…SLPAPASSSP (74 aa).

This is an uncharacterized protein from Equus caballus (Horse).